Here is a 569-residue protein sequence, read N- to C-terminus: Methionine--tRNA ligase (569 aa).

The short motif at 11–21 is the 'HIGH' region element; sequence PYINGIKHLGN. Zn(2+) contacts are provided by Cys-143, Cys-146, Cys-156, and Cys-159. The 'KMSKS' region signature appears at 342–346; it reads KFSTS. Residue Thr-345 participates in ATP binding.

It belongs to the class-I aminoacyl-tRNA synthetase family. MetG type 1 subfamily. As to quaternary structure, monomer. The cofactor is Zn(2+).

It is found in the cytoplasm. The enzyme catalyses tRNA(Met) + L-methionine + ATP = L-methionyl-tRNA(Met) + AMP + diphosphate. In terms of biological role, is required not only for elongation of protein synthesis but also for the initiation of all mRNA translation through initiator tRNA(fMet) aminoacylation. The sequence is that of Methionine--tRNA ligase from Caulobacter vibrioides (strain ATCC 19089 / CIP 103742 / CB 15) (Caulobacter crescentus).